The chain runs to 381 residues: Pentraxin-related protein PTX3 (381 aa).

Positions 1–17 (MHLPAILLCALWSAVVA) are cleaved as a signal peptide. Disulfide bonds link Cys-179–Cys-357 and Cys-210–Cys-271. Residues 179–381 (CETAIFFPMR…QAHGGAQYVS (203 aa)) form the Pentraxin (PTX) domain. N-linked (GlcNAc...) asparagine glycosylation occurs at Asn-220.

As to quaternary structure, homooctamer; disulfide-linked. Binds to C1q.

The protein resides in the secreted. Functionally, plays a role in the regulation of innate resistance to pathogens, inflammatory reactions, possibly clearance of self-components and female fertility. The chain is Pentraxin-related protein PTX3 (Ptx3) from Mus musculus (Mouse).